The primary structure comprises 605 residues: DNA primase (605 aa).

Residues 38–62 form a CHC2-type zinc finger; the sequence is CPFHDEKTPSFTVSEDKQICHCFGC. Residues 260 to 341 form the Toprim domain; the sequence is DEIVLLEGFM…NVFVIQLPSG (82 aa). Mg(2+) contacts are provided by Glu266, Asp310, and Asp312.

It belongs to the DnaG primase family. As to quaternary structure, monomer. Interacts with DnaB. It depends on Zn(2+) as a cofactor. The cofactor is Mg(2+).

It catalyses the reaction ssDNA + n NTP = ssDNA/pppN(pN)n-1 hybrid + (n-1) diphosphate.. RNA polymerase that catalyzes the synthesis of short RNA molecules used as primers for DNA polymerase during DNA replication. In Staphylococcus aureus (strain MSSA476), this protein is DNA primase.